We begin with the raw amino-acid sequence, 359 residues long: Olfactory receptor 8S1 (359 aa).

Topologically, residues 1-25 (MALGNHSTITEFLLLGLSADPNIRA) are extracellular. An N-linked (GlcNAc...) asparagine glycan is attached at Asn-5. Residues 26-46 (LLFVLFLGIYLLTIMENLMLL) traverse the membrane as a helical segment. Residues 47–54 (LMIRADSC) are Cytoplasmic-facing. The chain crosses the membrane as a helical span at residues 55–75 (LHKPMYFFLSHLSFVDLCFSS). The Extracellular portion of the chain corresponds to 76-99 (VIVPKMLENLLSQRKTISVEGCLA). Cys-97 and Cys-189 are joined by a disulfide. A helical transmembrane segment spans residues 100 to 120 (QVFFVFVTAGTEACLLSGMAY). The Cytoplasmic portion of the chain corresponds to 121 to 139 (DRHAAICRPLLYGQIMGKQ). The helical transmembrane segment at 140-160 (LYMHLVWGSWGLGFLDALINV) threads the bilayer. At 161-197 (LLAVNMVFCEAKIIHHYSYEMPSLLPLSCSDISRSLI) the chain is on the extracellular side. A helical transmembrane segment spans residues 198–217 (ALLCSTLLHGLGNFLLVFLS). The Cytoplasmic portion of the chain corresponds to 218 to 237 (YTRIISTILSISSTSGRSKA). A helical membrane pass occupies residues 238–258 (FSTCSAHLTAVTLYYGSGLLR). The Extracellular segment spans residues 259-269 (HLMPNSGSPIE). The chain crosses the membrane as a helical span at residues 270–290 (LIFSVQYTVVTPMLNSLIYSL). The Cytoplasmic segment spans residues 291-359 (KNKEVKGERS…ALRAAPTALP (69 aa)). Residues 301 to 338 (LRDSSHLPQLHKGQARWKRPAFTEGRREPGHPELSIPV) form a disordered region.

The protein belongs to the G-protein coupled receptor 1 family.

Its subcellular location is the cell membrane. Its function is as follows. Odorant receptor. The polypeptide is Olfactory receptor 8S1 (OR8S1) (Homo sapiens (Human)).